The primary structure comprises 314 residues: Cyclin-dependent kinase 2 (314 aa).

Residues Phe-8–Phe-287 enclose the Protein kinase domain. ATP contacts are provided by residues Ile-14–Val-22 and Lys-37. Phosphothreonine is present on Thr-18. The residue at position 19 (Tyr-19) is a Phosphotyrosine. The Proton acceptor role is filled by Asp-130. Tyr-162 is modified (phosphotyrosine). Residue Thr-163 is modified to Phosphothreonine.

This sequence belongs to the protein kinase superfamily. CMGC Ser/Thr protein kinase family. CDC2/CDKX subfamily. In terms of assembly, interacts with cyclin CycG.

The enzyme catalyses L-seryl-[protein] + ATP = O-phospho-L-seryl-[protein] + ADP + H(+). The catalysed reaction is L-threonyl-[protein] + ATP = O-phospho-L-threonyl-[protein] + ADP + H(+). It catalyses the reaction [DNA-directed RNA polymerase] + ATP = phospho-[DNA-directed RNA polymerase] + ADP + H(+). Functionally, like Cdk1, could play a key role in the control of the eukaryotic cell cycle. The chain is Cyclin-dependent kinase 2 from Drosophila melanogaster (Fruit fly).